The chain runs to 696 residues: Potassium voltage-gated channel subfamily KQT member 4 (696 aa).

A disordered region spans residues 1–20; that stretch reads MAEAPPRRLGLGPPPGDAPR. Topologically, residues 1–97 are cytoplasmic; it reads MAEAPPRRLG…VYNVLERPRG (97 aa). Arginine 94 lines the a 1,2-diacyl-sn-glycero-3-phospho-(1D-myo-inositol-4,5-bisphosphate) pocket. Residues 98–119 traverse the membrane as a helical segment; sequence WAFVYHVFIFLLVFSCLVLSVL. Over 120 to 130 the chain is Extracellular; that stretch reads STIQEHQELAN. Residues 131-153 form a helical membrane-spanning segment; sequence ECLLILEFVMIVVFGLEYIIRVW. At 154-169 the chain is on the cytoplasmic side; sequence SAGCCCRYRGWQGRFR. A helical transmembrane segment spans residues 170–192; the sequence is FARKPFCVIDFIVFVASVAVIAA. An a 1,2-diacyl-sn-glycero-3-phospho-(1D-myo-inositol-4,5-bisphosphate)-binding site is contributed by lysine 173. At 193 to 203 the chain is on the extracellular side; that stretch reads GTQGNIFATSA. A helical; Voltage-sensor membrane pass occupies residues 204 to 224; it reads LRSMRFLQILRMVRMDRRGGT. 4 residues coordinate a 1,2-diacyl-sn-glycero-3-phospho-(1D-myo-inositol-4,5-bisphosphate): arginine 220, arginine 221, lysine 226, and serine 236. Residues 225–236 are Cytoplasmic-facing; it reads WKLLGSVVYAHS. A helical transmembrane segment spans residues 237–259; sequence KELITAWYIGFLVLIFASFLVYL. The Extracellular segment spans residues 260-271; it reads AEKDANSDFSSY. The pore-forming intramembrane region spans 272–293; it reads ADSLWWGTITLTTIGYGDKTPH. A topological domain (extracellular) is located at residue threonine 294. The helical transmembrane segment at 295 to 323 threads the bilayer; it reads WLGRVLAAGFALLGISFFALPAGILGSGF. Over 324-696 the chain is Cytoplasmic; that stretch reads ALKVQEQHRQ…ISRSVSTNMD (373 aa). Positions 331 and 334 each coordinate a 1,2-diacyl-sn-glycero-3-phospho-(1D-myo-inositol-4,5-bisphosphate). The interaction with CALM stretch occupies residues 343–352; sequence AANLIQAAWR. The interval 445–484 is disordered; that stretch reads SSQKRTGPSKQHLAPPPIPTSPSSEQVGEASSPSKVQKSW. A compositionally biased stretch (polar residues) spans 465–484; the sequence is SPSSEQVGEASSPSKVQKSW. The tract at residues 536-550 is interaction with CALM; the sequence is RSVRILKFLVAKRKF. The segment at 547-651 is C-terminal assembly domain (tetramerization); the sequence is KRKFKETLRP…SRCLRSGTSA (105 aa). The tract at residues 589–609 is disordered; the sequence is GRGPGDRKTREKGDKGPSDTE. Residues 592–606 show a composition bias toward basic and acidic residues; that stretch reads PGDRKTREKGDKGPS. The stretch at 610–645 forms a coiled coil; it reads AVDEISMMGRVVKVEKQVQSIEHKLDLLLGFYSRCL.

Belongs to the potassium channel family. KQT (TC 1.A.1.15) subfamily. Kv7.4/KCNQ4 sub-subfamily. Homotetramer. Interacts (via C-terminus) with calmodulin; forms a heterooctameric structure (with 4:4 KCNQ1:CALM stoichiometry); the interaction is calcium-independent, constitutive, participates in the proper assembly of a functional channel. The interaction with calcium-free CALM controls channel trafficking whereas interaction with calcium-bound CALM regulates channel gating. May form a functional heteromultimeric channel with KCNQ3. Interacts with HSP90AB1; promotes cell surface expression of KCNQ4. As to expression, in the inner ear expressed in the outer sensory hair cells of the cochlea and in type I hair cells of the vestibular organs. Also expressed in the postsynaptic membrane of the calyx nerve endings innervating type I cells. In the brain expressed in neurons of many, but not all, nuclei of the central auditory pathway. Absent from most other brain regions.

The protein localises to the basal cell membrane. It catalyses the reaction K(+)(in) = K(+)(out). With respect to regulation, two molecules of phosphatidylinositol-4,5-bisphosphate (PIP2-I and PIP2-II) are essential to activate KCNQ4 channel by inducing the coupling of the voltage-sensing domain (VSD) and the pore-forming domain (PD). Upon channel activation, PIP2-I and PIP2-II disrupt the VSD-calmodulin/CALM interaction, causing the release of CALM from the VSD which triggers the opening of the gate. Calcium suppresses KCNQ4 channel current through calcium-bound CALM C-terminus. Therefore CALM acts as calcium sensor that controls channel activity. Its function is as follows. Pore-forming subunit of the voltage-gated potassium (Kv) channel involved in the regulation of sensory cells excitability in the cochlea. KCNQ4/Kv7.4 channel is composed of 4 pore-forming subunits assembled as tetramers. Promotes the outflow of potassium ions in the repolarization phase of action potential which plays a role in regulating membrane potential of excitable cells. The channel conducts a slowly activating and deactivating current. Current often shows some inward rectification at positive potentials. Channel may be selectively permeable in vitro to other cations besides potassium, in decreasing order of affinity K(+) = Rb(+) &gt; Cs(+) &gt; Na(+). Important for normal physiological function of inner ear such as sensory perception of sound. The protein is Potassium voltage-gated channel subfamily KQT member 4 of Mus musculus (Mouse).